We begin with the raw amino-acid sequence, 291 residues long: N-acetylmannosamine kinase (291 aa).

ATP contacts are provided by residues 5 to 12 (AIDIGGTK) and 132 to 139 (GVGGGVVS). Positions 156, 166, 168, and 173 each coordinate Zn(2+).

This sequence belongs to the ROK (NagC/XylR) family. NanK subfamily. In terms of assembly, homodimer.

It catalyses the reaction an N-acyl-D-mannosamine + ATP = an N-acyl-D-mannosamine 6-phosphate + ADP + H(+). It participates in amino-sugar metabolism; N-acetylneuraminate degradation; D-fructose 6-phosphate from N-acetylneuraminate: step 2/5. In terms of biological role, catalyzes the phosphorylation of N-acetylmannosamine (ManNAc) to ManNAc-6-P. This chain is N-acetylmannosamine kinase, found in Escherichia coli (strain 55989 / EAEC).